The primary structure comprises 83 residues: uncharacterized protein (83 aa).

The disordered stretch occupies residues 57–83; the sequence is ESVEEEEEFEDYDEFEEEEEYYYDDEY.

This is an uncharacterized protein from Archaeoglobus fulgidus (strain ATCC 49558 / DSM 4304 / JCM 9628 / NBRC 100126 / VC-16).